We begin with the raw amino-acid sequence, 761 residues long: Mitochondrial intermediate peptidase 1 (761 aa).

A Zn(2+)-binding site is contributed by histidine 530. Glutamate 531 is a catalytic residue. Residues histidine 534 and histidine 537 each contribute to the Zn(2+) site.

The protein belongs to the peptidase M3 family. Requires Zn(2+) as cofactor.

It localises to the mitochondrion matrix. It catalyses the reaction Release of an N-terminal octapeptide as second stage of processing of some proteins imported into the mitochondrion.. Cleaves proteins, imported into the mitochondrion, to their mature size. While most mitochondrial precursor proteins are processed to the mature form in one step by mitochondrial processing peptidase (MPP), the sequential cleavage by MIP of an octapeptide after initial processing by MPP is a required step for a subgroup of nuclear-encoded precursor proteins destined for the matrix or the inner membrane. The protein is Mitochondrial intermediate peptidase 1 (OCT1) of Cryptococcus neoformans var. neoformans serotype D (strain B-3501A) (Filobasidiella neoformans).